The primary structure comprises 169 residues: Phosphopantetheine adenylyltransferase (169 aa).

A substrate-binding site is contributed by serine 8. ATP is bound by residues 8–9 and histidine 16; that span reads SF. 3 residues coordinate substrate: lysine 40, threonine 72, and arginine 86. ATP contacts are provided by residues 87–89, glutamate 97, and 122–128; these read GLR and YSFLSSS.

Belongs to the bacterial CoaD family. Homohexamer. Mg(2+) serves as cofactor.

Its subcellular location is the cytoplasm. The enzyme catalyses (R)-4'-phosphopantetheine + ATP + H(+) = 3'-dephospho-CoA + diphosphate. The protein operates within cofactor biosynthesis; coenzyme A biosynthesis; CoA from (R)-pantothenate: step 4/5. Functionally, reversibly transfers an adenylyl group from ATP to 4'-phosphopantetheine, yielding dephospho-CoA (dPCoA) and pyrophosphate. The polypeptide is Phosphopantetheine adenylyltransferase (Cyanothece sp. (strain PCC 7425 / ATCC 29141)).